We begin with the raw amino-acid sequence, 794 residues long: DNA ligase (794 aa).

NAD(+)-binding positions include 35-39 (DAEYD), 84-85 (SL), and E126. K128 (N6-AMP-lysine intermediate) is an active-site residue. NAD(+) contacts are provided by R149, E186, K302, and K326. Zn(2+) contacts are provided by C420, C423, C450, and C456. The region spanning 711-794 (VEGLPLAGQT…KLFDEHGVAR (84 aa)) is the BRCT domain.

It belongs to the NAD-dependent DNA ligase family. LigA subfamily. Requires Mg(2+) as cofactor. It depends on Mn(2+) as a cofactor.

The enzyme catalyses NAD(+) + (deoxyribonucleotide)n-3'-hydroxyl + 5'-phospho-(deoxyribonucleotide)m = (deoxyribonucleotide)n+m + AMP + beta-nicotinamide D-nucleotide.. In terms of biological role, DNA ligase that catalyzes the formation of phosphodiester linkages between 5'-phosphoryl and 3'-hydroxyl groups in double-stranded DNA using NAD as a coenzyme and as the energy source for the reaction. It is essential for DNA replication and repair of damaged DNA. In Pseudomonas aeruginosa (strain UCBPP-PA14), this protein is DNA ligase.